A 73-amino-acid chain; its full sequence is Mating-type pheromone BBP1(3) (73 aa).

A disordered region spans residues 1–41; that stretch reads MASSVLARPGPSTVLPAMTRPPPPMAHRAAATPSFARSSQP. Residue cysteine 70 is modified to Cysteine methyl ester. Residue cysteine 70 is the site of S-farnesyl cysteine attachment. The propeptide at 71 to 73 is removed in mature form; sequence VVA.

It localises to the cell membrane. Functionally, activates B-regulated development. The protein is Mating-type pheromone BBP1(3) (BBP1(3)) of Schizophyllum commune (Split gill fungus).